The following is a 360-amino-acid chain: Nicotinate-nucleotide--dimethylbenzimidazole phosphoribosyltransferase (360 aa).

The active-site Proton acceptor is E327.

The protein belongs to the CobT family.

It carries out the reaction 5,6-dimethylbenzimidazole + nicotinate beta-D-ribonucleotide = alpha-ribazole 5'-phosphate + nicotinate + H(+). It functions in the pathway nucleoside biosynthesis; alpha-ribazole biosynthesis; alpha-ribazole from 5,6-dimethylbenzimidazole: step 1/2. Catalyzes the synthesis of alpha-ribazole-5'-phosphate from nicotinate mononucleotide (NAMN) and 5,6-dimethylbenzimidazole (DMB). The polypeptide is Nicotinate-nucleotide--dimethylbenzimidazole phosphoribosyltransferase (Shewanella baltica (strain OS185)).